We begin with the raw amino-acid sequence, 169 residues long: Putative phosphoesterase SAR0985 (169 aa).

The Proton donor role is filled by His34. 2 short sequence motifs (HXTX) span residues 34–37 and 115–118; these read HVTI and HFTI. Catalysis depends on His115, which acts as the Proton acceptor.

The protein belongs to the 2H phosphoesterase superfamily. YjcG family.

The protein is Putative phosphoesterase SAR0985 of Staphylococcus aureus (strain MRSA252).